A 244-amino-acid chain; its full sequence is Haloacid dehalogenase-like hydrolase domain-containing protein Sgpp (244 aa).

Aspartate 28 functions as the Nucleophile in the catalytic mechanism. 3 residues coordinate Mg(2+): aspartate 28, aspartate 30, and aspartate 189. The active-site Proton donor is aspartate 30.

The protein belongs to the HAD-like hydrolase superfamily. DOG/GPP family. The cofactor is Mg(2+). As to expression, ubiquitous with highest expression in flowers.

In terms of biological role, acts as a phosphosugar phosphatase on a broad range of sugar phosphate substrates with preferential activity on D-ribose-5-phosphate, 2-deoxy-D-ribose-5-phosphate, 2-deoxy-D-glucose-6-phosphate, and D-mannose-6-phosphate and with a lower activity on D-fructose-1-phosphate, D-glucose-6-phosphate, DL-glycerol-3-phosphate, and D-fructose-6-phosphate. This Arabidopsis thaliana (Mouse-ear cress) protein is Haloacid dehalogenase-like hydrolase domain-containing protein Sgpp (SGPP).